Reading from the N-terminus, the 66-residue chain is Large ribosomal subunit protein bL32 (66 aa).

The segment covering 1–19 (MAVPKRKMSRSNTRARRSQ) has biased composition (basic residues). The segment at 1–20 (MAVPKRKMSRSNTRARRSQW) is disordered.

It belongs to the bacterial ribosomal protein bL32 family.

The chain is Large ribosomal subunit protein bL32 from Beutenbergia cavernae (strain ATCC BAA-8 / DSM 12333 / CCUG 43141 / JCM 11478 / NBRC 16432 / NCIMB 13614 / HKI 0122).